A 161-amino-acid chain; its full sequence is 2-C-methyl-D-erythritol 2,4-cyclodiphosphate synthase (161 aa).

A divalent metal cation-binding residues include Asp-10 and His-12. 4-CDP-2-C-methyl-D-erythritol 2-phosphate-binding positions include 10–12 and 36–37; these read DVH and HS. Residue His-44 participates in a divalent metal cation binding. Residues 58 to 60, 134 to 137, Phe-141, and Arg-144 each bind 4-CDP-2-C-methyl-D-erythritol 2-phosphate; these read DIG and TTTE.

This sequence belongs to the IspF family. Homotrimer. A divalent metal cation is required as a cofactor.

It carries out the reaction 4-CDP-2-C-methyl-D-erythritol 2-phosphate = 2-C-methyl-D-erythritol 2,4-cyclic diphosphate + CMP. The protein operates within isoprenoid biosynthesis; isopentenyl diphosphate biosynthesis via DXP pathway; isopentenyl diphosphate from 1-deoxy-D-xylulose 5-phosphate: step 4/6. Involved in the biosynthesis of isopentenyl diphosphate (IPP) and dimethylallyl diphosphate (DMAPP), two major building blocks of isoprenoid compounds. Catalyzes the conversion of 4-diphosphocytidyl-2-C-methyl-D-erythritol 2-phosphate (CDP-ME2P) to 2-C-methyl-D-erythritol 2,4-cyclodiphosphate (ME-CPP) with a corresponding release of cytidine 5-monophosphate (CMP). The sequence is that of 2-C-methyl-D-erythritol 2,4-cyclodiphosphate synthase from Parabacteroides distasonis (strain ATCC 8503 / DSM 20701 / CIP 104284 / JCM 5825 / NCTC 11152).